The chain runs to 92 residues: MDGILRKLISIKDLHHCLQKFFVDERESIIEMNDNKLSEQFDLALIETHGKSKILKNLSLFKQTMSNYLTQLSKDNMKETENTVHKIKRVAA.

This is an uncharacterized protein from Haemophilus influenzae (strain ATCC 51907 / DSM 11121 / KW20 / Rd).